A 953-amino-acid polypeptide reads, in one-letter code: Valine--tRNA ligase (953 aa).

Positions 42–52 (PNVTGSLHMGH) match the 'HIGH' region motif. The short motif at 554–558 (KMSKS) is the 'KMSKS' region element. Lys-557 contacts ATP. Residues 884–952 (LIDKDAELDR…LEQQKATIAA (69 aa)) adopt a coiled-coil conformation.

It belongs to the class-I aminoacyl-tRNA synthetase family. ValS type 1 subfamily. As to quaternary structure, monomer.

The protein localises to the cytoplasm. The enzyme catalyses tRNA(Val) + L-valine + ATP = L-valyl-tRNA(Val) + AMP + diphosphate. In terms of biological role, catalyzes the attachment of valine to tRNA(Val). As ValRS can inadvertently accommodate and process structurally similar amino acids such as threonine, to avoid such errors, it has a 'posttransfer' editing activity that hydrolyzes mischarged Thr-tRNA(Val) in a tRNA-dependent manner. The polypeptide is Valine--tRNA ligase (Vibrio cholerae serotype O1 (strain ATCC 39315 / El Tor Inaba N16961)).